A 300-amino-acid chain; its full sequence is MSDDILFESKNYFYLGNYQSTINEINKKSRQIIEKSLKAESDYFLYRCYIAQGNYDLVLQETKNNRGSGEDPTIAGLQLLASYLSKPDENREGTLITITQWISDGVVKFNYHLQVIIATIYFNEQLYDEALQILNNCDHIEGLSMLIQIFLKIDRLDLAQKAYDTMKKIIDPDATPALLSLAWINIYNGEEKLKSALSSFEEMAERYGPTPLLLNGQAVCAIGMKRFEKAESLLLESIEKNPKNSDTLANLINCYINMKKPNEIIQRFINQLKTLSPKHDWTSAVNEAEALFEVSKSRFN.

It belongs to the COPE family. Oligomeric complex that consists of at least the alpha, beta, beta', gamma, delta, epsilon and zeta subunits.

The protein resides in the cytoplasm. Its subcellular location is the golgi apparatus membrane. It localises to the cytoplasmic vesicle. It is found in the COPI-coated vesicle membrane. The coatomer is a cytosolic protein complex that binds to dilysine motifs and reversibly associates with Golgi non-clathrin-coated vesicles, which further mediate biosynthetic protein transport from the ER, via the Golgi up to the trans Golgi network. The coatomer complex is required for budding from Golgi membranes, and is essential for the retrograde Golgi-to-ER transport of dilysine-tagged proteins. In Dictyostelium discoideum (Social amoeba), this protein is Coatomer subunit epsilon (cope).